Here is a 245-residue protein sequence, read N- to C-terminus: Orotidine 5'-phosphate decarboxylase (245 aa).

Substrate is bound by residues D22, K44, 71 to 80 (DLKFHDIPNT), T131, R192, Q201, G221, and R222. Catalysis depends on K73, which acts as the Proton donor.

This sequence belongs to the OMP decarboxylase family. Type 1 subfamily. As to quaternary structure, homodimer.

The catalysed reaction is orotidine 5'-phosphate + H(+) = UMP + CO2. The protein operates within pyrimidine metabolism; UMP biosynthesis via de novo pathway; UMP from orotate: step 2/2. In terms of biological role, catalyzes the decarboxylation of orotidine 5'-monophosphate (OMP) to uridine 5'-monophosphate (UMP). The chain is Orotidine 5'-phosphate decarboxylase from Escherichia coli O127:H6 (strain E2348/69 / EPEC).